Consider the following 223-residue polypeptide: Small ribosomal subunit protein uS3 (223 aa).

Positions 39–107 (VREFLKQKLK…PVQVSVEEIR (69 aa)) constitute a KH type-2 domain.

Belongs to the universal ribosomal protein uS3 family. In terms of assembly, part of the 30S ribosomal subunit. Forms a tight complex with proteins S10 and S14.

Functionally, binds the lower part of the 30S subunit head. Binds mRNA in the 70S ribosome, positioning it for translation. This Methylococcus capsulatus (strain ATCC 33009 / NCIMB 11132 / Bath) protein is Small ribosomal subunit protein uS3.